The primary structure comprises 338 residues: Aspartate carbamoyltransferase catalytic subunit (338 aa).

Carbamoyl phosphate is bound by residues Arg-57 and Thr-58. Lys-86 lines the L-aspartate pocket. Arg-107, His-135, and Gln-138 together coordinate carbamoyl phosphate. L-aspartate-binding residues include Arg-172 and Arg-234. 2 residues coordinate carbamoyl phosphate: Leu-274 and Pro-275.

The protein belongs to the aspartate/ornithine carbamoyltransferase superfamily. ATCase family. In terms of assembly, heterododecamer (2C3:3R2) of six catalytic PyrB chains organized as two trimers (C3), and six regulatory PyrI chains organized as three dimers (R2).

It catalyses the reaction carbamoyl phosphate + L-aspartate = N-carbamoyl-L-aspartate + phosphate + H(+). It functions in the pathway pyrimidine metabolism; UMP biosynthesis via de novo pathway; (S)-dihydroorotate from bicarbonate: step 2/3. Catalyzes the condensation of carbamoyl phosphate and aspartate to form carbamoyl aspartate and inorganic phosphate, the committed step in the de novo pyrimidine nucleotide biosynthesis pathway. This is Aspartate carbamoyltransferase catalytic subunit from Cellvibrio japonicus (strain Ueda107) (Pseudomonas fluorescens subsp. cellulosa).